The chain runs to 462 residues: MQSRKTRALGKGRARVTSCDDTCATATEMVPDAKDRILASVRDYHREQESPTFVAGSTPIRPSGAVLDEDDRVALVEAALELRIAAGGNARRFESEFARFFGLRKAHLVNSGSSANLLALSSLTSPKLGEARLRPGDEVITAAVGFPTTINPAVQNGLVPVFVDVELGTYNATPDRIKAAVTERTRAIMLAHTLGNPFAADEIAEIAKEHELFLVEDNCDAVGSTYRGRLTGTFGDLTTVSFYPAHHITSGEGGCVLTGSLELARIIESLRDWGRDCWCEPGVDNTCRKRFDYHLGTLPPGYDHKYTFSHVGYNLKTTDLQAALALSQLSKISAFGSARRRNWRRLREGLSGLPGLLLPVATPHSDPSWFGFAITISADAGFTRAALVNFLESRNIGTRLLFGGNITRHPAFEQVRYRIADALTNSDIVTDRTFWVGVYPGITDQMIDYVVESIAEFVAKSS.

Pyridoxal 5'-phosphate is bound by residues 112-113 (GS), Asp-220, and Ser-241. The Proton donor/acceptor role is filled by His-246. Asn-314 serves as a coordination point for pyridoxal 5'-phosphate.

This sequence belongs to the DegT/DnrJ/EryC1 family. Homodimer. The cofactor is pyridoxal 5'-phosphate.

The catalysed reaction is dTDP-4-dehydro-2,6-dideoxy-alpha-D-glucose + 2 reduced [2Fe-2S]-[ferredoxin] + 2 H(+) = dTDP-4-dehydro-2,3,6-trideoxy-alpha-D-hexopyranose + 2 oxidized [2Fe-2S]-[ferredoxin] + H2O. Involved in the biosynthesis of forosamine ((4-dimethylamino)-2,3,4,6-tetradeoxy-alpha-D-threo-hexopyranose), a highly deoxygenated sugar component of several bioactive natural products such as the insecticidal spinosyns A and D. Catalyzes C-3 deoxygenation of dTDP-4-keto-2,6-dideoxy-alpha-D-glucose to yield dTDP-4-keto-2,3,6-trideoxy-D-glucose via a combined transamination-deoxygenation reaction. The catalysis is initiated by a transamination step in which pyridoxal 5'-phosphate (PLP) is converted to pyridoxamine 5'-phosphate (PMP) in the presence of L-glutamate. This coenzyme then forms a Schiff base with dTDP-4-keto-2,6-dideoxy-alpha-D-glucose and the resulting adduct undergoes a PMP-mediated beta-dehydration reaction to give a sugar enamine intermediate, which after a 2 electrons reduction and hydrolysis yields dTDP-4-keto-2,3,6-trideoxy-D-glucose as a product. Requires cellular reductase (ferredoxin or flavodoxin reductase) rather than a specific partner reductase. L-glutamate is 20-fold more efficient than L-aspartate as an amino donor. In the absence of an electron source and in the presence of L-glutamate, catalyzes a transamination reaction, converting dTDP-4-keto-2,6-dideoxy-alpha-D-glucose to dTDP-4-amino-2,4,6-trideoxy-D-glucose. This is dTDP-4-dehydro-2,6-dideoxy-D-glucose 3-dehydratase from Saccharopolyspora spinosa.